The chain runs to 119 residues: Large ribosomal subunit protein uL18 (119 aa).

The protein belongs to the universal ribosomal protein uL18 family. Part of the 50S ribosomal subunit; part of the 5S rRNA/L5/L18/L25 subcomplex. Contacts the 5S and 23S rRNAs.

Its function is as follows. This is one of the proteins that bind and probably mediate the attachment of the 5S RNA into the large ribosomal subunit, where it forms part of the central protuberance. The chain is Large ribosomal subunit protein uL18 from Roseobacter denitrificans (strain ATCC 33942 / OCh 114) (Erythrobacter sp. (strain OCh 114)).